A 412-amino-acid polypeptide reads, in one-letter code: ATP phosphoribosyltransferase regulatory subunit (412 aa).

The protein belongs to the class-II aminoacyl-tRNA synthetase family. HisZ subfamily. In terms of assembly, heteromultimer composed of HisG and HisZ subunits.

The protein resides in the cytoplasm. Its pathway is amino-acid biosynthesis; L-histidine biosynthesis; L-histidine from 5-phospho-alpha-D-ribose 1-diphosphate: step 1/9. Functionally, required for the first step of histidine biosynthesis. May allow the feedback regulation of ATP phosphoribosyltransferase activity by histidine. The protein is ATP phosphoribosyltransferase regulatory subunit of Dehalococcoides mccartyi (strain ATCC BAA-2266 / KCTC 15142 / 195) (Dehalococcoides ethenogenes (strain 195)).